The chain runs to 131 residues: Small ribosomal subunit protein uS8c (131 aa).

The protein belongs to the universal ribosomal protein uS8 family. In terms of assembly, part of the 30S ribosomal subunit.

The protein localises to the plastid. It localises to the chloroplast. Its function is as follows. One of the primary rRNA binding proteins, it binds directly to 16S rRNA central domain where it helps coordinate assembly of the platform of the 30S subunit. The polypeptide is Small ribosomal subunit protein uS8c (rps8) (Tupiella akineta (Green alga)).